The following is a 638-amino-acid chain: Exotoxin A (638 aa).

An N-terminal signal peptide occupies residues 1 to 25; sequence MHLTPHWIPLVASLGLLAGGSFASA. The domain Ia (required for target cell recognition) stretch occupies residues 26–277; it reads AEEAFDLWNE…VISHRLHFPE (252 aa). The II (required for translocation in target cell cytoplasm) stretch occupies residues 278–389; the sequence is GGSLAALTAH…TGNDEAGAAS (112 aa). Residues cysteine 290 and cysteine 312 are joined by a disulfide bond. The segment at 390 to 429 is domain Ib; sequence ADVVSLTCPVAAGECAGPADSGDALLERNYPTGAEFLGDG. The tract at residues 430–638 is III (required for ADP-ribosyl activity); sequence GDISFSTRGT…PGKPPREDLK (209 aa). NAD(+)-binding positions include 465–467, serine 474, 479–485, and glutamate 578; these read HGT and GVRARSQ. The active site involves glutamate 578. The tract at residues 596–638 is disordered; sequence IPTDPRNVGGDLDPSSIPDKEQAISALPDYASQPGKPPREDLK.

In terms of processing, the 8 cysteines participate in intrachain disulfide bonds.

The catalysed reaction is diphthamide-[translation elongation factor 2] + NAD(+) = N-(ADP-D-ribosyl)diphthamide-[translation elongation factor 2] + nicotinamide + H(+). Its activity is regulated as follows. Inhibited by 1,8-naphthalimide (NAP) as well as a number of poly(ADP-ribose) polymerase inhibitors and other compounds. Its function is as follows. An NAD-dependent ADP-ribosyltransferase (ADPRT). Catalyzes the transfer of the ADP ribosyl moiety of oxidized NAD (NAD(+)) onto eukaryotic elongation factor 2 (eEF-2) thus arresting protein synthesis. Has an LD(50) of 65 ng/ml against the human lung epithelial cell line C38. This is Exotoxin A from Pseudomonas aeruginosa (strain ATCC 15692 / DSM 22644 / CIP 104116 / JCM 14847 / LMG 12228 / 1C / PRS 101 / PAO1).